The sequence spans 1435 residues: Neuropathy target esterase sws (1435 aa).

At 1–35 (MDVLELLRVSGSNMYYSTFLADAWCYYISNQITMT) the chain is on the lumenal side. A helical transmembrane segment spans residues 36 to 56 (MYLYCALGVLSMLFIGWFVYF). Over 57–1435 (KRLARLRLRH…NTNNETKNYL (1379 aa)) the chain is Cytoplasmic. 176–303 (IFGHFEKPIF…IRVIQVIMIR (128 aa)) provides a ligand contact to a nucleoside 3',5'-cyclic phosphate. Positions 361-372 (AASGTAGSTHTA) are enriched in low complexity. Disordered regions lie at residues 361 to 405 (AASG…ELSG) and 422 to 452 (NSYPPLYHQRESDGNLSTRRGSITQQEQPEV). The segment covering 435–449 (GNLSTRRGSITQQEQ) has biased composition (polar residues). At S443 the chain carries Phosphoserine. Residues 474–601 (ELGL…VVRR) and 590–717 (IVLD…LSHR) each bind a nucleoside 3',5'-cyclic phosphate. A PNPLA domain is found at 944-1110 (LVLGGGGARG…VNNLPGHLWR (167 aa)). The short motif at 948–953 (GGGARG) is the GXGXXG element. Residues 975–979 (GVSIG) carry the GXSXG motif. The active-site Nucleophile is the S977. D1097 acts as the Proton acceptor in catalysis. The DGA/G signature appears at 1097-1099 (DGG). The segment at 1308-1435 (MDKATQSTPP…NTNNETKNYL (128 aa)) is disordered. A compositionally biased stretch (polar residues) spans 1311–1322 (ATQSTPPLQSKA). Basic and acidic residues-rich tracts occupy residues 1330 to 1361 (SKEEARHEWEIKREQKQELAREQELERERELS) and 1393 to 1424 (MDKKKTKDNDRDEVRGSAEDTGKEKEEDKENR). A compositionally biased stretch (polar residues) spans 1425–1435 (SNTNNETKNYL).

This sequence belongs to the NTE family. Interacts with Pka-C3; interaction inhibits the catalytic function of Pka-C3 and the esterase activity of sws.

The protein resides in the endoplasmic reticulum membrane. It catalyses the reaction a 1-acyl-sn-glycero-3-phosphocholine + H2O = sn-glycerol 3-phosphocholine + a fatty acid + H(+). Phospholipase B that deacylates intracellular phosphatidylcholine (PtdCho), generating glycerophosphocholine (GroPtdCho). This deacylation occurs at both sn-2 and sn-1 positions of PtdCho. Its specific chemical modification by certain organophosphorus (OP) compounds leads to distal axonopathy. Plays a role in the signaling mechanism between neurons and glia that regulates glia wrapping during development of the adult brain. Essential for membrane lipid homeostasis and cell survival in both neurons and glia of the adult brain. The protein is Neuropathy target esterase sws of Drosophila persimilis (Fruit fly).